Reading from the N-terminus, the 501-residue chain is MMDPAAGSGPDGAAVVPPELPALPVAAEDPMALYRQVLRDFKELFFCLEPMEITRYVHRNEGRCLSLGPPKGWHVMLRTEDGIITAAKQAASKLICCREPLTPLGYAVILLPEPRRDHHDGMVATPYVVFMGRFSRVYAYDTREKYMVLVSHNLDELARYGVSRSEIAYRDVIHTTLRRMTVPVPRRYPKGARTMHVLFLNDTTPEGSYATAERILGCDVKLHTPGYGTVIMRLMKTVQQLHRIWPFCALTEVESRRWWWAVRANLATPWYVLGVTGRPRPGRSFVAEVLVLLDWFGAVYAIQMDDPNHYVRRVANTITEFFRMGLLKMVFRHRRFERERQRQTRMEHRHLCPHHHERAVDHKRDILFNEDAALPDERRERERRILQQQYDWLCLTERFDPHEGAWERLDPNTLVLHRYDTNSQSYVLDPDIVGVEAAEREAAGHQDDTGPRLHCLVTTRSSTREGAERVITALVHQSRLVTYSDPFPLKSLTGVREYIQI.

Belongs to the herpesviridae US22 family.

The protein localises to the virion tegument. This chain is Tegument protein US24 (US24), found in Human cytomegalovirus (strain Merlin) (HHV-5).